Reading from the N-terminus, the 396-residue chain is MSRPLQITILGATGSIGLSTLDVVARHPDRYDVFALTGFSRLAELRALCLKHRPRYAVVSDQAQARILQDQLHADGVSTRVLDGEGGLSEVAAHPEVDVVMAAIVGAAGLKPTLAAVQSGKRVLLANKEALVMSGALFMQALRDSGAVLLPIDSEHNAIFQCLPTDYSQGLGTVGVRRILLTASGGPFREMAPDLLSDVTPEQACAHPNWSMGRKISVDSASMMNKGLELIEACWLFDARPHQVEVVIHPQSVIHSMVDYVDGSVLAQLGNPDMRTPIAHALAWPERIESGVSALDLLRVGRLDFQAPDDRRFPCLRLARTAAEVGGTAPAMLNAANEVAVDAFLNRRIRFTEIASIIDDVLNHEASVPTVCLEDVLAADRRARDVAGQWLYRNGR.

NADPH contacts are provided by threonine 13, glycine 14, serine 15, isoleucine 16, and asparagine 127. 1-deoxy-D-xylulose 5-phosphate is bound at residue lysine 128. Glutamate 129 is a binding site for NADPH. Position 153 (aspartate 153) interacts with Mn(2+). The 1-deoxy-D-xylulose 5-phosphate site is built by serine 154, glutamate 155, serine 184, and histidine 207. Glutamate 155 contacts Mn(2+). Glycine 213 contacts NADPH. 4 residues coordinate 1-deoxy-D-xylulose 5-phosphate: serine 220, asparagine 225, lysine 226, and glutamate 229. Glutamate 229 contributes to the Mn(2+) binding site.

Belongs to the DXR family. Requires Mg(2+) as cofactor. Mn(2+) serves as cofactor.

The enzyme catalyses 2-C-methyl-D-erythritol 4-phosphate + NADP(+) = 1-deoxy-D-xylulose 5-phosphate + NADPH + H(+). The protein operates within isoprenoid biosynthesis; isopentenyl diphosphate biosynthesis via DXP pathway; isopentenyl diphosphate from 1-deoxy-D-xylulose 5-phosphate: step 1/6. Catalyzes the NADPH-dependent rearrangement and reduction of 1-deoxy-D-xylulose-5-phosphate (DXP) to 2-C-methyl-D-erythritol 4-phosphate (MEP). The sequence is that of 1-deoxy-D-xylulose 5-phosphate reductoisomerase from Stutzerimonas stutzeri (strain A1501) (Pseudomonas stutzeri).